A 424-amino-acid polypeptide reads, in one-letter code: Double homeobox protein 4-like protein 2 (424 aa).

Polar residues predominate over residues 1-10; it reads MALPTPSDST. 5 disordered regions span residues 1–24, 72–102, 148–167, 218–362, and 388–414; these read MALPTPSDSTLPAEARGRGRRRRL, SRQLRQHRRESRPWPGRRGPPEGRRKRTAVT, RHPGQGGRAPAQAGGLCSAA, LQPS…LQEP, and QPLLETEAPGELEASEEAASLEAPLSE. 2 consecutive DNA-binding regions (homeobox) follow at residues 19-78 and 94-153; these read GRRR…LRQH and GRRK…PGQG. Positions 265–274 are enriched in basic and acidic residues; it reads KSREDRDPQR. Composition is skewed to low complexity over residues 278–302 and 319–329; these read PGPCAVAQPGPAQAGPQGQGVLAPP and AGAAWEPQAGA.

It is found in the nucleus. May be involved in transcriptional regulation. This is Double homeobox protein 4-like protein 2 (DUX4L2) from Homo sapiens (Human).